A 282-amino-acid chain; its full sequence is Phosphatidylserine decarboxylase proenzyme (282 aa).

Catalysis depends on charge relay system; for autoendoproteolytic cleavage activity residues Asp-88, His-144, and Ser-247. Residue Ser-247 is the Schiff-base intermediate with substrate; via pyruvic acid; for decarboxylase activity of the active site. Ser-247 is modified (pyruvic acid (Ser); by autocatalysis).

This sequence belongs to the phosphatidylserine decarboxylase family. PSD-B subfamily. Prokaryotic type I sub-subfamily. In terms of assembly, heterodimer of a large membrane-associated beta subunit and a small pyruvoyl-containing alpha subunit. Pyruvate serves as cofactor. In terms of processing, is synthesized initially as an inactive proenzyme. Formation of the active enzyme involves a self-maturation process in which the active site pyruvoyl group is generated from an internal serine residue via an autocatalytic post-translational modification. Two non-identical subunits are generated from the proenzyme in this reaction, and the pyruvate is formed at the N-terminus of the alpha chain, which is derived from the carboxyl end of the proenzyme. The autoendoproteolytic cleavage occurs by a canonical serine protease mechanism, in which the side chain hydroxyl group of the serine supplies its oxygen atom to form the C-terminus of the beta chain, while the remainder of the serine residue undergoes an oxidative deamination to produce ammonia and the pyruvoyl prosthetic group on the alpha chain. During this reaction, the Ser that is part of the protease active site of the proenzyme becomes the pyruvoyl prosthetic group, which constitutes an essential element of the active site of the mature decarboxylase.

The protein resides in the cell membrane. It carries out the reaction a 1,2-diacyl-sn-glycero-3-phospho-L-serine + H(+) = a 1,2-diacyl-sn-glycero-3-phosphoethanolamine + CO2. Its pathway is phospholipid metabolism; phosphatidylethanolamine biosynthesis; phosphatidylethanolamine from CDP-diacylglycerol: step 2/2. In terms of biological role, catalyzes the formation of phosphatidylethanolamine (PtdEtn) from phosphatidylserine (PtdSer). The polypeptide is Phosphatidylserine decarboxylase proenzyme (Xanthomonas campestris pv. campestris (strain 8004)).